The primary structure comprises 1222 residues: Chitin synthase 4 (1222 aa).

2 disordered regions span residues 1-101 (MSLP…ERNR) and 138-200 (TERT…KRIE). Composition is skewed to polar residues over residues 11-24 (QAYN…NSPS) and 42-77 (NQAS…SPDG). Over residues 182 to 196 (SGKIKRKSRRHSKPP) the composition is skewed to basic residues. The next 2 helical transmembrane spans lie at 205 to 225 (PPTF…GFIM) and 243 to 263 (MGLI…TFGF). Asn-378, Asn-418, and Asn-440 each carry an N-linked (GlcNAc...) asparagine glycan. A helical transmembrane segment spans residues 513 to 533 (ALILSVVGVRFFLAIIFQWFI). Positions 576-630 (TVYGSSDRSSKRASFLPTTSRFSSVGGPDIRSQGGRRMPTTMASQSTSNQLLTPN) are disordered. A compositionally biased stretch (polar residues) spans 616–630 (TMASQSTSNQLLTPN). Asn-637 and Asn-1030 each carry an N-linked (GlcNAc...) asparagine glycan. 3 consecutive transmembrane segments (helical) span residues 1055–1075 (FIIF…AFTF), 1089–1109 (IIPL…VIIT), and 1113–1133 (WSYI…NFVL). Positions 1202–1222 (GGQTWTSPPGHQYNEEYYSDA) are disordered.

The protein belongs to the chitin synthase family. Class IV subfamily.

The protein localises to the cell membrane. The enzyme catalyses [(1-&gt;4)-N-acetyl-beta-D-glucosaminyl](n) + UDP-N-acetyl-alpha-D-glucosamine = [(1-&gt;4)-N-acetyl-beta-D-glucosaminyl](n+1) + UDP + H(+). Polymerizes chitin, a structural polymer of the cell wall and septum, by transferring the sugar moiety of UDP-GlcNAc to the non-reducing end of the growing chitin polymer. Shows additive effects in septum formation with CHS1, CHS2, CHS3A, CHS5, CHS6 and CHS7. Regulates conidiation. Involved in virulence and mediates mycotoxin deoxinivalenol (DON) biosynthesis via the regulation of the expression of TRI4, TRI5 and TRI6. This is Chitin synthase 4 from Gibberella zeae (strain ATCC MYA-4620 / CBS 123657 / FGSC 9075 / NRRL 31084 / PH-1) (Wheat head blight fungus).